The following is a 472-amino-acid chain: H(+)/Cl(-) exchange transporter ClcA (472 aa).

The Cytoplasmic portion of the chain corresponds to 1–32 (MKAETPSFEAHQFVRVRRGDAVRRLIQRDKTP). Residues 33 to 69 (LAVLLMAAVVGTLAGLVGVAFEKSVNWVQNQRIGALA) form a helical membrane-spanning segment. Topologically, residues 70–76 (QVADHWY) are periplasmic. Residues 77-100 (LVWPLAFILSALLAMVGYFLVRRF) traverse the membrane as a helical segment. The Selectivity filter part_1 motif lies at 106-110 (GSGIP). Residue serine 107 coordinates chloride. Positions 109–116 (IPEIEGAL) form an intramembrane region, helical. Topologically, residues 117 to 123 (EELRPVR) are cytoplasmic. The next 2 helical transmembrane spans lie at 124–141 (WWRV…TLGA) and 148–166 (EGPM…LDIF). The Selectivity filter part_2 motif lies at 146-150 (GREGP). Residues 167 to 176 (RMRSPEARHT) lie on the Cytoplasmic side of the membrane. 2 intramembrane regions (helical) span residues 177-189 (LLAT…LSAA) and 193-201 (PLAGILFII). The Cytoplasmic segment spans residues 202–214 (EEMRPQFRYNLIS). A helical membrane pass occupies residues 215 to 232 (IKAVFTGVIMSSIVFRIF). The Periplasmic segment spans residues 233–252 (NGEAAIIEVGKLSNAPVNTL). Residues 253–281 (WLYLVLGMLFGCFGPLFNFLVLRTQDIFQ) traverse the membrane as a helical segment. Over 282–287 (RIHGGN) the chain is Cytoplasmic. The chain crosses the membrane as a helical span at residues 288-309 (IKTWVLMGGVIGGICGLLGLMQ). At 310 to 329 (PSAVGGGFNLIPIAAAGNFS) the chain is on the periplasmic side. A run of 2 helical transmembrane segments spans residues 330 to 349 (VGLL…ICFS) and 355 to 376 (GIFA…MAAI). The short motif at 355-359 (GIFAP) is the Selectivity filter part_3 element. The chloride site is built by isoleucine 356 and phenylalanine 357. Residues 377–386 (PLFPAYHLDA) are Periplasmic-facing. The segment at residues 387-401 (GTFAIAGMGALLAAS) is an intramembrane region (helical). The segment at residues 402 to 404 (VRA) is an intramembrane region (note=Loop between two helices). The segment at residues 405-416 (PLTGIVLVLEMT) is an intramembrane region (helical). Positions 417-421 (DNYQL) form an intramembrane region, note=Loop between two helices. Residues 422 to 438 (ILPMIITCLGATLLAQF) traverse the membrane as a helical segment. Residues 439-472 (LGGKPLYSTILQRTLAKQEAEQAAKAQQAPRENT) are Cytoplasmic-facing. Residue tyrosine 445 participates in chloride binding.

It belongs to the chloride channel (TC 2.A.49) family. ClcA subfamily. In terms of assembly, homodimer.

It is found in the cell inner membrane. It carries out the reaction 2 chloride(in) + H(+)(out) = 2 chloride(out) + H(+)(in). Proton-coupled chloride transporter. Functions as antiport system and exchanges two chloride ions for 1 proton. Probably acts as an electrical shunt for an outwardly-directed proton pump that is linked to amino acid decarboxylation, as part of the extreme acid resistance (XAR) response. The polypeptide is H(+)/Cl(-) exchange transporter ClcA (Klebsiella pneumoniae (strain 342)).